The following is a 272-amino-acid chain: Undecaprenyl-diphosphatase (272 aa).

8 consecutive transmembrane segments (helical) span residues 1–21 (MSYL…FLPI), 38–58 (PGAT…VVFF), 84–104 (VRMG…GYLF), 112–132 (FRSL…LGLA), 145–165 (MTYG…VPGV), 183–203 (PVAA…SGLY), 219–239 (QTAV…AGLM), and 250–270 (FVVY…TGAI).

Belongs to the UppP family.

Its subcellular location is the cell membrane. The catalysed reaction is di-trans,octa-cis-undecaprenyl diphosphate + H2O = di-trans,octa-cis-undecaprenyl phosphate + phosphate + H(+). Functionally, catalyzes the dephosphorylation of undecaprenyl diphosphate (UPP). Confers resistance to bacitracin. In Clavibacter michiganensis subsp. michiganensis (strain NCPPB 382), this protein is Undecaprenyl-diphosphatase.